We begin with the raw amino-acid sequence, 208 residues long: 3-demethoxyubiquinol 3-hydroxylase (208 aa).

Residues Glu-57, Glu-87, His-90, Glu-139, Glu-171, and His-174 each contribute to the Fe cation site.

Belongs to the COQ7 family. Fe cation is required as a cofactor.

It is found in the cell membrane. It catalyses the reaction a 5-methoxy-2-methyl-3-(all-trans-polyprenyl)benzene-1,4-diol + AH2 + O2 = a 3-demethylubiquinol + A + H2O. The protein operates within cofactor biosynthesis; ubiquinone biosynthesis. Catalyzes the hydroxylation of 2-nonaprenyl-3-methyl-6-methoxy-1,4-benzoquinol during ubiquinone biosynthesis. The chain is 3-demethoxyubiquinol 3-hydroxylase from Burkholderia vietnamiensis (strain G4 / LMG 22486) (Burkholderia cepacia (strain R1808)).